The chain runs to 439 residues: Ribosomal protein uS12 methylthiotransferase RimO (439 aa).

Positions 2 to 114 (SKLYLMSLGC…IDEMILKKTN (113 aa)) constitute an MTTase N-terminal domain. Positions 11, 45, 77, 146, 150, and 153 each coordinate [4Fe-4S] cluster. The 232-residue stretch at 132-363 (TGSNSHAFIK…VDEVIEKSFE (232 aa)) folds into the Radical SAM core domain.

The protein belongs to the methylthiotransferase family. RimO subfamily. The cofactor is [4Fe-4S] cluster.

It is found in the cytoplasm. The enzyme catalyses L-aspartate(89)-[ribosomal protein uS12]-hydrogen + (sulfur carrier)-SH + AH2 + 2 S-adenosyl-L-methionine = 3-methylsulfanyl-L-aspartate(89)-[ribosomal protein uS12]-hydrogen + (sulfur carrier)-H + 5'-deoxyadenosine + L-methionine + A + S-adenosyl-L-homocysteine + 2 H(+). In terms of biological role, catalyzes the methylthiolation of an aspartic acid residue of ribosomal protein uS12. This is Ribosomal protein uS12 methylthiotransferase RimO from Campylobacter jejuni subsp. jejuni serotype O:6 (strain 81116 / NCTC 11828).